Consider the following 544-residue polypeptide: Chaperonin GroEL (544 aa).

ATP contacts are provided by residues 29–32 (TLGP), K50, 86–90 (DGTTT), G415, and D495.

It belongs to the chaperonin (HSP60) family. Forms a cylinder of 14 subunits composed of two heptameric rings stacked back-to-back. Interacts with the co-chaperonin GroES.

It localises to the cytoplasm. The catalysed reaction is ATP + H2O + a folded polypeptide = ADP + phosphate + an unfolded polypeptide.. Together with its co-chaperonin GroES, plays an essential role in assisting protein folding. The GroEL-GroES system forms a nano-cage that allows encapsulation of the non-native substrate proteins and provides a physical environment optimized to promote and accelerate protein folding. This Tannerella forsythia (Bacteroides forsythus) protein is Chaperonin GroEL.